A 413-amino-acid chain; its full sequence is Peptidase T (413 aa).

Residue His81 coordinates Zn(2+). The active site involves Asp83. Residue Asp143 participates in Zn(2+) binding. Glu178 serves as the catalytic Proton acceptor. Residues Glu179, Asp201, and His383 each coordinate Zn(2+).

It belongs to the peptidase M20B family. Requires Zn(2+) as cofactor.

The protein localises to the cytoplasm. It catalyses the reaction Release of the N-terminal residue from a tripeptide.. In terms of biological role, cleaves the N-terminal amino acid of tripeptides. The chain is Peptidase T from Lactococcus lactis subsp. hordniae.